The following is a 929-amino-acid chain: Collagen alpha-1(XII) chain (929 aa).

Positions 1–49 (DVEIFAVGVKDAVRSELEAIATPPTATHVYTVEDFDAFQRISFELTQSI) constitute a VWFA 1 domain. Fibronectin type-III domains lie at 67–156 (PPRD…LEVR), 158–250 (APRN…VGEP), 251–340 (KNLR…LQER), 342–432 (SPRD…ASPD), 434–521 (KIVK…LSPF), and 523–613 (APRS…TLRD). A glycan (N-linked (GlcNAc...) asparagine) is linked at Asn98. Ser231, Ser324, and Ser415 each carry an O-linked (Xyl...) (chondroitin sulfate) serine glycan. The 173-residue stretch at 633-805 (DIVLLVDGSW…SLLTNIVNDL (173 aa)) folds into the VWFA 2 domain. One can recognise a Fibronectin type-III 7 domain in the interval 821–910 (PPSNLVTSEP…AGTETTLPIP (90 aa)).

Belongs to the fibril-associated collagens with interrupted helices (FACIT) family. As to quaternary structure, trimer of identical chains each containing 190 kDa of non-triple-helical sequences. Post-translationally, the triple-helical tail is stabilized by disulfide bonds at each end. Prolines at the third position of the tripeptide repeating unit (G-X-Y) are hydroxylated in some or all of the chains.

The protein resides in the secreted. It is found in the extracellular space. The protein localises to the extracellular matrix. Functionally, type XII collagen interacts with type I collagen-containing fibrils, the COL1 domain could be associated with the surface of the fibrils, and the COL2 and NC3 domains may be localized in the perifibrillar matrix. Could play a developmental role in regeneration. The sequence is that of Collagen alpha-1(XII) chain from Notophthalmus viridescens (Eastern newt).